Consider the following 514-residue polypeptide: 2-isopropylmalate synthase (514 aa).

The 264-residue stretch at 5 to 268 folds into the Pyruvate carboxyltransferase domain; that stretch reads LIIFDTTLRD…DVGIDTTQIV (264 aa). Aspartate 14, histidine 202, histidine 204, and asparagine 239 together coordinate Mn(2+). A regulatory domain region spans residues 395 to 514; that stretch reads KFVSLSQHSE…KDDKLNPQRA (120 aa).

This sequence belongs to the alpha-IPM synthase/homocitrate synthase family. LeuA type 1 subfamily. In terms of assembly, homodimer. It depends on Mn(2+) as a cofactor.

It is found in the cytoplasm. The enzyme catalyses 3-methyl-2-oxobutanoate + acetyl-CoA + H2O = (2S)-2-isopropylmalate + CoA + H(+). Its pathway is amino-acid biosynthesis; L-leucine biosynthesis; L-leucine from 3-methyl-2-oxobutanoate: step 1/4. Catalyzes the condensation of the acetyl group of acetyl-CoA with 3-methyl-2-oxobutanoate (2-ketoisovalerate) to form 3-carboxy-3-hydroxy-4-methylpentanoate (2-isopropylmalate). In Burkholderia vietnamiensis (strain G4 / LMG 22486) (Burkholderia cepacia (strain R1808)), this protein is 2-isopropylmalate synthase.